We begin with the raw amino-acid sequence, 69 residues long: Large ribosomal subunit protein uL29 (69 aa).

Belongs to the universal ribosomal protein uL29 family.

The chain is Large ribosomal subunit protein uL29 from Natronomonas pharaonis (strain ATCC 35678 / DSM 2160 / CIP 103997 / JCM 8858 / NBRC 14720 / NCIMB 2260 / Gabara) (Halobacterium pharaonis).